Reading from the N-terminus, the 493-residue chain is Signal recognition particle subunit SRP54 3 (493 aa).

Positions 1–294 (MVLADVGGSI…NVEPFVARLL (294 aa)) are G-domain. Residues 107–114 (GLQGSGKT), 189–193 (DTSGR), and 247–250 (TKLD) contribute to the GTP site. Residues 295 to 493 (GRGDLPGLID…KMLAGMRGGA (199 aa)) are M-domain.

It belongs to the GTP-binding SRP family. SRP54 subfamily. As to quaternary structure, component of a signal recognition particle (SRP) complex that consists of a 7SL RNA molecule of 300 nucleotides and six protein subunits: SRP72, SRP68, SRP54, SRP19, SRP14 and SRP9.

Its subcellular location is the cytoplasm. It is found in the endoplasmic reticulum. The enzyme catalyses GTP + H2O = GDP + phosphate + H(+). Its function is as follows. Component of the signal recognition particle (SRP) complex, a ribonucleoprotein complex that mediates the cotranslational targeting of secretory and membrane proteins to the endoplasmic reticulum (ER). As part of the SRP complex, associates with the SRP receptor (SR) component SRPRA to target secretory proteins to the endoplasmic reticulum membrane. Binds to the signal sequence of presecretory proteins when they emerge from the ribosomes. Displays basal GTPase activity, and stimulates reciprocal GTPase activation of the SR subunit SRPRA. Forms a guanosine 5'-triphosphate (GTP)-dependent complex with the SR subunit SRPRA. SR compaction and GTPase mediated rearrangement of SR drive SRP-mediated cotranslational protein translocation into the ER. Requires the presence of SRP9/SRP14 and/or SRP19 to stably interact with RNA. The sequence is that of Signal recognition particle subunit SRP54 3 (SRP54-3) from Hordeum vulgare (Barley).